The primary structure comprises 352 residues: Glycerol-1-phosphate dehydrogenase [NAD(P)+] (352 aa).

NAD(+)-binding positions include 99–103 and 121–124; these read GKSID and TVAS. Aspartate 126 is a binding site for substrate. Residue serine 130 participates in NAD(+) binding. Residue aspartate 173 coordinates substrate. The Zn(2+) site is built by aspartate 173 and histidine 253. Histidine 257 is a substrate binding site. Position 269 (histidine 269) interacts with Zn(2+).

The protein belongs to the glycerol-1-phosphate dehydrogenase family. As to quaternary structure, homodimer. It depends on Zn(2+) as a cofactor.

The protein resides in the cytoplasm. It carries out the reaction sn-glycerol 1-phosphate + NAD(+) = dihydroxyacetone phosphate + NADH + H(+). It catalyses the reaction sn-glycerol 1-phosphate + NADP(+) = dihydroxyacetone phosphate + NADPH + H(+). Its pathway is membrane lipid metabolism; glycerophospholipid metabolism. Its activity is regulated as follows. Totally inhibited by EDTA in vitro. In terms of biological role, catalyzes the NAD(P)H-dependent reduction of dihydroxyacetonephosphate (DHAP or glycerone phosphate) to glycerol 1-phosphate (G1P). The G1P thus generated is used as the glycerophosphate backbone of phospholipids in the cellular membranes of Archaea. Is also able to catalyze the reverse reaction, i.e. the NAD(+)-dependent oxidation of G1P but not of G3P. Is not active toward glycerol, dihydroxyacetone, glyceraldehyde phosphate, and glycerol-2-phosphate. In Aeropyrum pernix (strain ATCC 700893 / DSM 11879 / JCM 9820 / NBRC 100138 / K1), this protein is Glycerol-1-phosphate dehydrogenase [NAD(P)+] (egsA).